Reading from the N-terminus, the 1029-residue chain is Carbamoyl phosphate synthase large chain (1029 aa).

The carboxyphosphate synthetic domain stretch occupies residues 1–402; the sequence is MPKRTDLQTI…SLQKALRSTE (402 aa). ATP is bound by residues R129, R169, G175, G176, E208, I210, E215, G241, V242, H243, Q285, and E299. One can recognise an ATP-grasp 1 domain in the interval 133–328; the sequence is QAAMKKIGVE…IAKIAALLAV (196 aa). Q285, E299, and N301 together coordinate Mg(2+). Mn(2+) is bound by residues Q285, E299, and N301. Residues 403-546 are oligomerization domain; sequence SDVRGAFAEM…YSTYEWEDEV (144 aa). Residues 547-929 are carbamoyl phosphate synthetic domain; sequence TPTDKPKVVI…AYYRAELGAK (383 aa). The 193-residue stretch at 671–863 folds into the ATP-grasp 2 domain; sequence NALCERLGLP…LAKYAARIAV (193 aa). 10 residues coordinate ATP: R707, Q747, L749, E754, G779, V780, H781, S782, Q822, and E834. Residues Q822, E834, and N836 each contribute to the Mg(2+) site. Mn(2+) contacts are provided by Q822, E834, and N836. The region spanning 930 to 1028 is the MGS-like domain; it reads SNLPLSGTAL…QAWQQREAAA (99 aa). Residues 930 to 1029 are allosteric domain; it reads SNLPLSGTAL…AWQQREAAAS (100 aa).

It belongs to the CarB family. Composed of two chains; the small (or glutamine) chain promotes the hydrolysis of glutamine to ammonia, which is used by the large (or ammonia) chain to synthesize carbamoyl phosphate. Tetramer of heterodimers (alpha,beta)4. Mg(2+) serves as cofactor. The cofactor is Mn(2+).

The enzyme catalyses hydrogencarbonate + L-glutamine + 2 ATP + H2O = carbamoyl phosphate + L-glutamate + 2 ADP + phosphate + 2 H(+). It catalyses the reaction hydrogencarbonate + NH4(+) + 2 ATP = carbamoyl phosphate + 2 ADP + phosphate + 2 H(+). It functions in the pathway amino-acid biosynthesis; L-arginine biosynthesis; carbamoyl phosphate from bicarbonate: step 1/1. It participates in pyrimidine metabolism; UMP biosynthesis via de novo pathway; (S)-dihydroorotate from bicarbonate: step 1/3. In terms of biological role, large subunit of the glutamine-dependent carbamoyl phosphate synthetase (CPSase). CPSase catalyzes the formation of carbamoyl phosphate from the ammonia moiety of glutamine, carbonate, and phosphate donated by ATP, constituting the first step of 2 biosynthetic pathways, one leading to arginine and/or urea and the other to pyrimidine nucleotides. The large subunit (synthetase) binds the substrates ammonia (free or transferred from glutamine from the small subunit), hydrogencarbonate and ATP and carries out an ATP-coupled ligase reaction, activating hydrogencarbonate by forming carboxy phosphate which reacts with ammonia to form carbamoyl phosphate. The sequence is that of Carbamoyl phosphate synthase large chain from Deinococcus geothermalis (strain DSM 11300 / CIP 105573 / AG-3a).